A 184-amino-acid chain; its full sequence is Endoribonuclease YbeY (184 aa).

3 residues coordinate Zn(2+): His118, His122, and His128.

The protein belongs to the endoribonuclease YbeY family. It depends on Zn(2+) as a cofactor.

It localises to the cytoplasm. Its function is as follows. Single strand-specific metallo-endoribonuclease involved in late-stage 70S ribosome quality control and in maturation of the 3' terminus of the 16S rRNA. The chain is Endoribonuclease YbeY from Nocardia farcinica (strain IFM 10152).